Consider the following 212-residue polypeptide: Interleukin-6 (212 aa).

An N-terminal signal peptide occupies residues 1–29; it reads MNSLSTSAFSPVAFSLGLLLVMATAFPTP. An intrachain disulfide couples cysteine 72 to cysteine 78. Serine 81 carries the post-translational modification Phosphoserine. An intrachain disulfide couples cysteine 101 to cysteine 111. The segment at 156–175 is disordered; sequence QKGKNPDKATTPNPTTNAGL. Residues 163–175 are compositionally biased toward polar residues; it reads KATTPNPTTNAGL.

This sequence belongs to the IL-6 superfamily. In terms of assembly, component of a hexamer of two molecules each of IL6, IL6R and IL6ST; first binds to IL6R to associate with the signaling subunit IL6ST. Interacts with IL6R (via the N-terminal ectodomain); this interaction may be affected by IL6R-binding with SORL1, hence decreasing IL6 cis signaling. Interacts with SORL1 (via the N-terminal ectodomain); this interaction leads to IL6 internalization and lysosomal degradation. May form a trimeric complex with the soluble SORL1 ectodomain and soluble IL6R receptor; this interaction might stabilize circulating IL6, hence promoting IL6 trans signaling.

The protein localises to the secreted. Functionally, cytokine with a wide variety of biological functions in immunity, tissue regeneration, and metabolism. Binds to IL6R, then the complex associates to the signaling subunit IL6ST/gp130 to trigger the intracellular IL6-signaling pathway. The interaction with the membrane-bound IL6R and IL6ST stimulates 'classic signaling', whereas the binding of IL6 and soluble IL6R to IL6ST stimulates 'trans-signaling'. Alternatively, 'cluster signaling' occurs when membrane-bound IL6:IL6R complexes on transmitter cells activate IL6ST receptors on neighboring receiver cells. Its function is as follows. IL6 is a potent inducer of the acute phase response. Rapid production of IL6 contributes to host defense during infection and tissue injury, but excessive IL6 synthesis is involved in disease pathology. In the innate immune response, is synthesized by myeloid cells, such as macrophages and dendritic cells, upon recognition of pathogens through toll-like receptors (TLRs) at the site of infection or tissue injury. In the adaptive immune response, is required for the differentiation of B cells into immunoglobulin-secreting cells. Plays a major role in the differentiation of CD4(+) T cell subsets. Essential factor for the development of T follicular helper (Tfh) cells that are required for the induction of germinal-center formation. Required to drive naive CD4(+) T cells to the Th17 lineage. Also required for proliferation of myeloma cells and the survival of plasmablast cells. In terms of biological role, acts as an essential factor in bone homeostasis and on vessels directly or indirectly by induction of VEGF, resulting in increased angiogenesis activity and vascular permeability. Induces, through 'trans-signaling' and synergistically with IL1B and TNF, the production of VEGF. Involved in metabolic controls, is discharged into the bloodstream after muscle contraction increasing lipolysis and improving insulin resistance. 'Trans-signaling' in central nervous system also regulates energy and glucose homeostasis. Mediates, through GLP-1, crosstalk between insulin-sensitive tissues, intestinal L cells and pancreatic islets to adapt to changes in insulin demand. Also acts as a myokine. Plays a protective role during liver injury, being required for maintenance of tissue regeneration. Also has a pivotal role in iron metabolism by regulating HAMP/hepcidin expression upon inflammation or bacterial infection. Through activation of IL6ST-YAP-NOTCH pathway, induces inflammation-induced epithelial regeneration. The polypeptide is Interleukin-6 (IL6) (Sus scrofa (Pig)).